The primary structure comprises 37 residues: Large ribosomal subunit protein bL36 (37 aa).

This sequence belongs to the bacterial ribosomal protein bL36 family.

The polypeptide is Large ribosomal subunit protein bL36 (Solibacter usitatus (strain Ellin6076)).